Here is a 489-residue protein sequence, read N- to C-terminus: Argininosuccinate lyase (489 aa).

Positions 462 to 489 are disordered; that stretch reads QARYQQTEPAEEPPLPPSSPGSGLPLES.

It belongs to the lyase 1 family. Argininosuccinate lyase subfamily.

It localises to the cytoplasm. The enzyme catalyses 2-(N(omega)-L-arginino)succinate = fumarate + L-arginine. Its pathway is amino-acid biosynthesis; L-arginine biosynthesis; L-arginine from L-ornithine and carbamoyl phosphate: step 3/3. The protein is Argininosuccinate lyase of Synechococcus sp. (strain JA-3-3Ab) (Cyanobacteria bacterium Yellowstone A-Prime).